The sequence spans 481 residues: Histidine--tRNA ligase, cytoplasmic (481 aa).

The tract at residues Met-1–Tyr-48 is disordered. Basic and acidic residues predominate over residues Lys-12–Glu-31.

This sequence belongs to the class-II aminoacyl-tRNA synthetase family.

The protein localises to the cytoplasm. The enzyme catalyses tRNA(His) + L-histidine + ATP = L-histidyl-tRNA(His) + AMP + diphosphate + H(+). The chain is Histidine--tRNA ligase, cytoplasmic (hisS) from Dictyostelium discoideum (Social amoeba).